Consider the following 193-residue polypeptide: Thymidylate kinase (193 aa).

7 to 14 (GIDGCGKS) is a binding site for ATP.

Belongs to the thymidylate kinase family.

The catalysed reaction is dTMP + ATP = dTDP + ADP. In terms of biological role, phosphorylation of dTMP to form dTDP in both de novo and salvage pathways of dTTP synthesis. This chain is Thymidylate kinase, found in Coprothermobacter proteolyticus (strain ATCC 35245 / DSM 5265 / OCM 4 / BT).